The following is a 302-amino-acid chain: MKIAVLSRNSRLYSTRRLMEAAQSRGHQIRVVDPLRCYMNIATSNPEIHYKGQKLEAFDAVIPRIGASITFYGTAVLRQFEMLGTYPLNESQGISRSRDKLRSMQLLSREGVGMPATGFAHSPDDTDDLMQLVGGSPVVIKLLEGTQGIGVVLAETRKAASSVIQALRGLKAHFLVQEFIEEAGGADIRCLVVGGKVVAAMKRQGKEGEFRSNLHRGGSASLVRITPKERATAVKAAKVLGLNVCGVDILRANSGPVIMEVNSSPGLEGIETATGKDVAGMIIEFIERNRKPGKTGTKGRRG.

The region spanning 104–287 (MQLLSREGVG…VAGMIIEFIE (184 aa)) is the ATP-grasp domain. ATP contacts are provided by residues K141, 178–179 (EF), D187, and 211–213 (RSN). Mg(2+) contacts are provided by D248, E260, and N262. Residues D248, E260, and N262 each contribute to the Mn(2+) site.

The protein belongs to the RimK family. Mg(2+) is required as a cofactor. Requires Mn(2+) as cofactor.

This chain is Probable alpha-L-glutamate ligase, found in Halorhodospira halophila (strain DSM 244 / SL1) (Ectothiorhodospira halophila (strain DSM 244 / SL1)).